Reading from the N-terminus, the 451-residue chain is uncharacterized protein (451 aa).

In terms of domain architecture, TRAM spans 1 to 59; it reads MLKKNDIVEVEISDLSHDGAGIAKVDGLVFFVDNALPTEKIRMRVLKVKKNIAFGKVES. Residues glutamine 283, tyrosine 312, glutamate 333, and aspartate 381 each coordinate S-adenosyl-L-methionine. Cysteine 408 (nucleophile) is an active-site residue.

Belongs to the class I-like SAM-binding methyltransferase superfamily. RNA M5U methyltransferase family.

This is an uncharacterized protein from Streptococcus mutans serotype c (strain ATCC 700610 / UA159).